The chain runs to 182 residues: PRA1 family protein D (182 aa).

An N-acetylalanine modification is found at Ala-2. The next 3 helical transmembrane spans lie at 68–88, 107–127, and 129–149; these read LITR…WFFL, IVAV…GVWL, and ALTT…LRGT. Residues 163–182 form a disordered region; sequence PMLSTSGGGNDGARGDYSGI.

It belongs to the PRA1 family. In terms of assembly, interacts with PRA1F2 and PRA1F3. Interacts with the cauliflower mosaic virus (CaMV) movement protein (via N-terminus). In terms of tissue distribution, expressed in hypocotyls, roots, lateral roots, lateral root caps, columella cells, leaves, shoot apex, stems and flowers.

It localises to the endosome membrane. Functionally, may be involved in both secretory and endocytic intracellular trafficking in the endosomal/prevacuolar compartments. This is PRA1 family protein D (PRA1D) from Arabidopsis thaliana (Mouse-ear cress).